A 206-amino-acid chain; its full sequence is Small ribosomal subunit protein uS4 (206 aa).

One can recognise an S4 RNA-binding domain in the interval 96-156; the sequence is GRLDNVVYRM…EKAKKQSRVK (61 aa).

The protein belongs to the universal ribosomal protein uS4 family. As to quaternary structure, part of the 30S ribosomal subunit. Contacts protein S5. The interaction surface between S4 and S5 is involved in control of translational fidelity.

Functionally, one of the primary rRNA binding proteins, it binds directly to 16S rRNA where it nucleates assembly of the body of the 30S subunit. In terms of biological role, with S5 and S12 plays an important role in translational accuracy. The polypeptide is Small ribosomal subunit protein uS4 (Cronobacter sakazakii (strain ATCC BAA-894) (Enterobacter sakazakii)).